The primary structure comprises 142 residues: Hemoglobin subunit alpha-5 (142 aa).

The Globin domain occupies 2-142 (TFSSAEKAAI…VSAVLVSKYR (141 aa)). O2 is bound at residue histidine 59. Residue histidine 88 participates in heme b binding.

The protein belongs to the globin family. In terms of assembly, heterotetramer of two alpha chains and two beta chains. Red blood cells.

This is a larval (tadpole) alpha-globin. The protein is Hemoglobin subunit alpha-5 (hba5) of Xenopus laevis (African clawed frog).